Reading from the N-terminus, the 264-residue chain is Small ribosomal subunit protein uS2 (264 aa).

The interval 228–264 is disordered; the sequence is HEDVSAGPVEEQSDEAQAAEQGTEGDTAQLTSSQGRS. The segment covering 251 to 264 has biased composition (polar residues); sequence EGDTAQLTSSQGRS.

Belongs to the universal ribosomal protein uS2 family.

This chain is Small ribosomal subunit protein uS2, found in Deinococcus radiodurans (strain ATCC 13939 / DSM 20539 / JCM 16871 / CCUG 27074 / LMG 4051 / NBRC 15346 / NCIMB 9279 / VKM B-1422 / R1).